We begin with the raw amino-acid sequence, 1690 residues long: Restin homolog (1690 aa).

Polar residues-rich tracts occupy residues 1–11 (MSDDTSASGGT) and 39–51 (NIPT…TGIP). The tract at residues 1-105 (MSDDTSASGG…ESDDNLSSIN (105 aa)) is disordered. 2 positions are modified to phosphoserine: S64 and S67. The region spanning 143-185 (GDTHFAAGEWAGVVLDEPNGKNDGCVSGKRYFQCEPKRGIFSR) is the CAP-Gly 1 domain. Residues 195–227 (AGAQTPTSPLAKSSPDRSRTVSPTASIRSSMLR) form a disordered region. Polar residues predominate over residues 214-226 (TVSPTASIRSSML). S216 bears the Phosphoserine mark. A CAP-Gly 2 domain is found at 260–302 (GETQFAPGNWCGVELDEPSGKNDGTVDDIRYFECKPKYGVFVP). Phosphoserine occurs at positions 309, 322, and 325. T327 carries the phosphothreonine modification. S328 is subject to Phosphoserine. Position 362 is a phosphothreonine (T362). Coiled-coil stretches lie at residues 378–468 (QHVE…VSAT), 484–660 (GALQ…DMLR), 667–916 (EEKS…TKLK), 926–981 (LSSC…ELQA), 1001–1121 (ATGH…EAIQ), 1158–1549 (EADM…AQMN), and 1565–1600 (DIET…LETL). Residues 843 to 905 (QQAAASGEEG…GSLEEEAKKS (63 aa)) form a disordered region. The segment covering 865 to 885 (QLKSQAEETQSELKSTQSNLE) has biased composition (polar residues). Disordered stretches follow at residues 1031 to 1052 (QLQD…KEKS) and 1400 to 1419 (KLDE…NEIQ). 2 stretches are compositionally biased toward basic and acidic residues: residues 1040-1052 (TKLK…KEKS) and 1410-1419 (SQKKSHNEIQ). The tract at residues 1635 to 1665 (TEDCPIQGSEDQDYSTPSSESNNNEKERKLP) is disordered. Residue T1681 is modified to Phosphothreonine. The residue at position 1682 (S1682) is a Phosphoserine.

As to quaternary structure, interacts with Lva. As to expression, specifically expressed at the tip of the furrow in cellularizing blastoderms. CLIP-190 and jar are coexpressed at several times in development and in a number of tissues, including embryonic axonal neuron processes and posterior pole.

The protein resides in the cytoplasm. The protein localises to the cytoskeleton. Its subcellular location is the golgi apparatus. It localises to the microtubule organizing center. It is found in the perinuclear region. Functionally, together CLIP-190 and jar may coordinate the interaction between the actin and microtubule cytoskeleton. May link endocytic vesicles to microtubules. May play a role in formation of furrows during cellularization. This Drosophila melanogaster (Fruit fly) protein is Restin homolog (CLIP-190).